The chain runs to 400 residues: Deoxyguanosinetriphosphate triphosphohydrolase-like protein (400 aa).

An HD domain is found at 73 to 215; sequence RLTHSIEVSQ…AAIADDIAYN (143 aa).

It belongs to the dGTPase family. Type 2 subfamily.

This Bartonella tribocorum (strain CIP 105476 / IBS 506) protein is Deoxyguanosinetriphosphate triphosphohydrolase-like protein.